We begin with the raw amino-acid sequence, 175 residues long: Inner membrane protein p54 (175 aa).

Residues 32–52 (CTILVAIVVLIIIIIVLIYLF) traverse the membrane as a helical segment. Over residues 79–89 (QWAGATPQPGT) the composition is skewed to polar residues. The tract at residues 79-121 (QWAGATPQPGTSKPAGATTGNVGKPITDRPATDRPVTNNPVTD) is disordered. Residues 141-153 (YTTATTQNTASQT) form an interaction with host DYNLL1 region.

This sequence belongs to the asfivirus envelope protein p54 family. As to quaternary structure, interacts with the host light chain cytoplasmic dynein DYNLL1; this interaction is critical for intracellular microtubule-dependent virus transport toward viral factories.

It is found in the virion membrane. Its subcellular location is the host cytoplasm. The protein localises to the host cytoskeleton. The protein resides in the host endoplasmic reticulum membrane. Inner envelope protein involved, through its interaction with host dynein, in the intracellular microtubule-dependent transport of viral capsid toward viral factories. Seems to induce caspase-3 activation and apoptosis. Plays a role in virion morphogenesis by recruiting and transforming the host ER membranes into the precursors of the viral envelope. Involved in virus attachment to the host cell. The chain is Inner membrane protein p54 from African swine fever virus (isolate Pig/Kenya/KEN-50/1950) (ASFV).